We begin with the raw amino-acid sequence, 926 residues long: Coatomer subunit beta'-2 (926 aa).

WD repeat units lie at residues 13–52, 55–94, 97–136, 140–180, 183–224, 227–266, 269–309, 351–390, and 461–501; these read QRSE…MAKS, VTEL…KVKV, AHSD…ACTQ, GHSH…PNFT, AHQK…CVQT, GHTH…LENT, YGLE…ASMD, TCDL…RSFG, and RIDV…SHFD. The disordered stretch occupies residues 847–926; that stretch reads EEESLENGDM…GTNNEGNPSA (80 aa). Residues 868-887 show a composition bias toward basic and acidic residues; that stretch reads NEQRNEDDVAEHVEEHHEEK. Over residues 888 to 900 the composition is skewed to acidic residues; sequence EAEEEEGIVDGDS. Over residues 917–926 the composition is skewed to polar residues; that stretch reads GTNNEGNPSA.

This sequence belongs to the WD repeat COPB2 family. As to quaternary structure, oligomeric complex that consists of at least the alpha, beta, beta', gamma, delta, epsilon and zeta subunits.

The protein resides in the cytoplasm. It localises to the golgi apparatus membrane. Its subcellular location is the cytoplasmic vesicle. The protein localises to the COPI-coated vesicle membrane. Functionally, the coatomer is a cytosolic protein complex that binds to dilysine motifs and reversibly associates with Golgi non-clathrin-coated vesicles, which further mediate biosynthetic protein transport from the ER, via the Golgi up to the trans Golgi network. Coatomer complex is required for budding from Golgi membranes, and is essential for the retrograde Golgi-to-ER transport of dilysine-tagged proteins. The protein is Coatomer subunit beta'-2 of Arabidopsis thaliana (Mouse-ear cress).